The chain runs to 401 residues: Argininosuccinate synthase (401 aa).

ATP-binding positions include 11 to 19 and Ala-38; that span reads AYSGGLDTS. L-citrulline is bound by residues Tyr-89 and Ser-94. Residue Gly-119 coordinates ATP. L-aspartate contacts are provided by Thr-121, Asn-125, and Asp-126. An L-citrulline-binding site is contributed by Asn-125. Positions 129, 177, 186, 262, and 274 each coordinate L-citrulline.

This sequence belongs to the argininosuccinate synthase family. Type 1 subfamily. In terms of assembly, homotetramer.

Its subcellular location is the cytoplasm. It carries out the reaction L-citrulline + L-aspartate + ATP = 2-(N(omega)-L-arginino)succinate + AMP + diphosphate + H(+). It participates in amino-acid biosynthesis; L-arginine biosynthesis; L-arginine from L-ornithine and carbamoyl phosphate: step 2/3. The sequence is that of Argininosuccinate synthase from Nitratidesulfovibrio vulgaris (strain DSM 19637 / Miyazaki F) (Desulfovibrio vulgaris).